A 316-amino-acid chain; its full sequence is Glycerol-3-phosphate dehydrogenase [NAD(P)+] (316 aa).

NADPH-binding residues include Ser14, Phe15, Arg35, and Lys109. Sn-glycerol 3-phosphate contacts are provided by Lys109 and Gly137. Ala141 is an NADPH binding site. Sn-glycerol 3-phosphate contacts are provided by Lys192, Asp248, Ser258, Arg259, and Asn260. Lys192 acts as the Proton acceptor in catalysis. Arg259 is an NADPH binding site. 2 residues coordinate NADPH: Leu283 and Glu285.

It belongs to the NAD-dependent glycerol-3-phosphate dehydrogenase family.

The protein localises to the cytoplasm. It catalyses the reaction sn-glycerol 3-phosphate + NAD(+) = dihydroxyacetone phosphate + NADH + H(+). The enzyme catalyses sn-glycerol 3-phosphate + NADP(+) = dihydroxyacetone phosphate + NADPH + H(+). It functions in the pathway membrane lipid metabolism; glycerophospholipid metabolism. Its function is as follows. Catalyzes the reduction of the glycolytic intermediate dihydroxyacetone phosphate (DHAP) to sn-glycerol 3-phosphate (G3P), the key precursor for phospholipid synthesis. This chain is Glycerol-3-phosphate dehydrogenase [NAD(P)+], found in Rickettsia prowazekii (strain Madrid E).